The primary structure comprises 824 residues: Intraflagellar transport protein 88 homolog (824 aa).

2 disordered regions span residues 1–27 and 111–134; these read MENV…PAYD and AFDP…DSPE. 11 TPR repeats span residues 196 to 229, 232 to 265, 271 to 304, 415 to 448, 450 to 483, 484 to 517, 518 to 551, 552 to 585, 586 to 619, 620 to 653, and 654 to 687; these read YSVL…KMFS, GRLK…IPSV, IKIM…APSL, NDLE…DSRV, SAAA…DRYN, PSAL…DSSC, TEAL…LRNS, AQVL…VPTD, SQAL…FPSN, IEVI…QPTQ, and VKWQ…FPEN. Over residues 721–731 the composition is skewed to basic and acidic residues; sequence EMREQRIKSGR. Positions 721–824 are disordered; it reads EMREQRIKSG…EELGDDLLPE (104 aa). Positions 748–757 are enriched in polar residues; the sequence is DSGQNNSASS. The segment covering 797–808 has biased composition (basic and acidic residues); it reads ERPKTAAKKRID. Over residues 809–824 the composition is skewed to acidic residues; sequence EDDFADEELGDDLLPE.

As to quaternary structure, component of the IFT complex B, at least composed of IFT20, IFT22, IFT25, IFT27, IFT46, IFT52, TRAF3IP1/IFT54, IFT57, IFT74, IFT80, IFT81, and IFT88. Interacts with IFT20, IFT22, IFT25, IFT27, IFT52, TRAF3IP1, IFT74, IFT80 and IFT81. Interacts with IFT172. Interacts with IFT57. Interacts with IFT46. Interacts with IFT70B. Interacts with C2CD3. Interacts with ENTR1 (via N-terminus). Interacts with LRRC56. Interacts with DZIP1. Interacts with CCDC38. Interacts with CCDC146. Interacts with CFAP53. Testis.

It is found in the cytoplasm. The protein localises to the cytoskeleton. It localises to the microtubule organizing center. Its subcellular location is the centrosome. The protein resides in the centriole. It is found in the cilium basal body. The protein localises to the cell projection. It localises to the cilium. Its subcellular location is the flagellum. Positively regulates primary cilium biogenesis. Also involved in autophagy since it is required for trafficking of ATG16L and the expansion of the autophagic compartment. The sequence is that of Intraflagellar transport protein 88 homolog (Ift88) from Mus musculus (Mouse).